Consider the following 389-residue polypeptide: Liposome tubulation protein MamY (389 aa).

Over 1 to 31 (MAIAAIMGDVLMLMGFNKAAFGKLNSASRAA) the chain is Cytoplasmic. Residues 32–52 (LIGAVIWAVLSIVYLTIFNGW) form a helical membrane-spanning segment. Residues 53–62 (KNLFTMLPHE) are Lumenal-facing. A helical transmembrane segment spans residues 63–83 (FFIVLLSIALPIGLTVLILML). Over 84 to 389 (SRIVKSVDTL…TETAPDSGMD (306 aa)) the chain is Cytoplasmic.

It belongs to the magnetosome MamY family.

It localises to the magnetosome membrane. Causes tubulation when added to magnetosome-derived liposomes, binds liposomes; may be involved in constriction of the cell inner membrane to form mature magnetosomes. Binds preferentially to cardiolipin, a component of bacterial membranes, with very poor to no binding of other tested (phospho)lipids. Addition of cardiolipin to magnetosome-derived lipids increases tubulation. May function with MamX, MamZ amd Mms6. The polypeptide is Liposome tubulation protein MamY (Paramagnetospirillum magneticum (strain ATCC 700264 / AMB-1) (Magnetospirillum magneticum)).